A 533-amino-acid polypeptide reads, in one-letter code: CTP synthase (533 aa).

The amidoligase domain stretch occupies residues 1 to 269 (MKKNLKILVI…HEILSSKLNI (269 aa)). Residue Ser16 coordinates CTP. UTP is bound at residue Ser16. ATP contacts are provided by residues 17-22 (GIGKGV) and Asp73. The Mg(2+) site is built by Asp73 and Glu143. Residues 150–152 (DME), 190–195 (KSKPTQ), and Lys226 each bind CTP. UTP contacts are provided by residues 190–195 (KSKPTQ) and Lys226. Residues 304-533 (YAELDDSYAS…LFLGLIKACI (230 aa)) form the Glutamine amidotransferase type-1 domain. Gly355 is a binding site for L-glutamine. Residue Cys382 is the Nucleophile; for glutamine hydrolysis of the active site. L-glutamine-binding positions include 383–386 (LGLQ), Glu406, and Arg466. Catalysis depends on residues His511 and Glu513.

The protein belongs to the CTP synthase family. In terms of assembly, homotetramer.

It catalyses the reaction UTP + L-glutamine + ATP + H2O = CTP + L-glutamate + ADP + phosphate + 2 H(+). The enzyme catalyses L-glutamine + H2O = L-glutamate + NH4(+). The catalysed reaction is UTP + NH4(+) + ATP = CTP + ADP + phosphate + 2 H(+). Its pathway is pyrimidine metabolism; CTP biosynthesis via de novo pathway; CTP from UDP: step 2/2. With respect to regulation, allosterically activated by GTP, when glutamine is the substrate; GTP has no effect on the reaction when ammonia is the substrate. The allosteric effector GTP functions by stabilizing the protein conformation that binds the tetrahedral intermediate(s) formed during glutamine hydrolysis. Inhibited by the product CTP, via allosteric rather than competitive inhibition. Its function is as follows. Catalyzes the ATP-dependent amination of UTP to CTP with either L-glutamine or ammonia as the source of nitrogen. Regulates intracellular CTP levels through interactions with the four ribonucleotide triphosphates. The polypeptide is CTP synthase (Borreliella burgdorferi (strain ATCC 35210 / DSM 4680 / CIP 102532 / B31) (Borrelia burgdorferi)).